Here is a 341-residue protein sequence, read N- to C-terminus: Holliday junction branch migration complex subunit RuvB (341 aa).

Positions 1-22 (MSETAGKGVTMPEIMQSSYPDE) are disordered. The tract at residues 4–193 (TAGKGVTMPE…FGIISRLEFY (190 aa)) is large ATPase domain (RuvB-L). ATP-binding positions include Ile32, Arg33, Gly74, Lys77, Thr78, Thr79, 140 to 142 (EDY), Arg183, Tyr193, and Arg230. Residue Thr78 coordinates Mg(2+). The small ATPAse domain (RuvB-S) stretch occupies residues 194–264 (TPEELSQIIL…LVNHALQKLD (71 aa)). Residues 267-341 (EKGLDQMDRK…KAYKHLNLTD (75 aa)) are head domain (RuvB-H). DNA is bound by residues Arg322 and Arg327.

The protein belongs to the RuvB family. In terms of assembly, homohexamer. Forms an RuvA(8)-RuvB(12)-Holliday junction (HJ) complex. HJ DNA is sandwiched between 2 RuvA tetramers; dsDNA enters through RuvA and exits via RuvB. An RuvB hexamer assembles on each DNA strand where it exits the tetramer. Each RuvB hexamer is contacted by two RuvA subunits (via domain III) on 2 adjacent RuvB subunits; this complex drives branch migration. In the full resolvosome a probable DNA-RuvA(4)-RuvB(12)-RuvC(2) complex forms which resolves the HJ.

It is found in the cytoplasm. The enzyme catalyses ATP + H2O = ADP + phosphate + H(+). In terms of biological role, the RuvA-RuvB-RuvC complex processes Holliday junction (HJ) DNA during genetic recombination and DNA repair, while the RuvA-RuvB complex plays an important role in the rescue of blocked DNA replication forks via replication fork reversal (RFR). RuvA specifically binds to HJ cruciform DNA, conferring on it an open structure. The RuvB hexamer acts as an ATP-dependent pump, pulling dsDNA into and through the RuvAB complex. RuvB forms 2 homohexamers on either side of HJ DNA bound by 1 or 2 RuvA tetramers; 4 subunits per hexamer contact DNA at a time. Coordinated motions by a converter formed by DNA-disengaged RuvB subunits stimulates ATP hydrolysis and nucleotide exchange. Immobilization of the converter enables RuvB to convert the ATP-contained energy into a lever motion, pulling 2 nucleotides of DNA out of the RuvA tetramer per ATP hydrolyzed, thus driving DNA branch migration. The RuvB motors rotate together with the DNA substrate, which together with the progressing nucleotide cycle form the mechanistic basis for DNA recombination by continuous HJ branch migration. Branch migration allows RuvC to scan DNA until it finds its consensus sequence, where it cleaves and resolves cruciform DNA. The protein is Holliday junction branch migration complex subunit RuvB of Lawsonia intracellularis (strain PHE/MN1-00).